A 491-amino-acid polypeptide reads, in one-letter code: Anthranilate synthase component 1 (491 aa).

L-tryptophan contacts are provided by residues S49 and 271–273 (PYL). Chorismate is bound at residue 306–307 (GT). Position 333 (E333) interacts with Mg(2+). Chorismate is bound by residues Y421, R441, 455-457 (GAG), and G457. E470 lines the Mg(2+) pocket.

Belongs to the anthranilate synthase component I family. Heterotetramer consisting of two non-identical subunits: a beta subunit (TrpG) and a large alpha subunit (TrpE). It depends on Mg(2+) as a cofactor.

The enzyme catalyses chorismate + L-glutamine = anthranilate + pyruvate + L-glutamate + H(+). The protein operates within amino-acid biosynthesis; L-tryptophan biosynthesis; L-tryptophan from chorismate: step 1/5. With respect to regulation, feedback inhibited by tryptophan. In terms of biological role, part of a heterotetrameric complex that catalyzes the two-step biosynthesis of anthranilate, an intermediate in the biosynthesis of L-tryptophan. In the first step, the glutamine-binding beta subunit (TrpG) of anthranilate synthase (AS) provides the glutamine amidotransferase activity which generates ammonia as a substrate that, along with chorismate, is used in the second step, catalyzed by the large alpha subunit of AS (TrpE) to produce anthranilate. In the absence of TrpG, TrpE can synthesize anthranilate directly from chorismate and high concentrations of ammonia. The polypeptide is Anthranilate synthase component 1 (trpE) (Neisseria gonorrhoeae (strain ATCC 700825 / FA 1090)).